We begin with the raw amino-acid sequence, 231 residues long: uncharacterized protein (231 aa).

It belongs to the DnaA family. HdA subfamily.

This is an uncharacterized protein from Haemophilus influenzae (strain ATCC 51907 / DSM 11121 / KW20 / Rd).